Reading from the N-terminus, the 439-residue chain is Glutamate-1-semialdehyde 2,1-aminomutase (439 aa).

The residue at position 279 (Lys279) is an N6-(pyridoxal phosphate)lysine.

It belongs to the class-III pyridoxal-phosphate-dependent aminotransferase family. HemL subfamily. Homodimer. Pyridoxal 5'-phosphate serves as cofactor.

Its subcellular location is the cytoplasm. It catalyses the reaction (S)-4-amino-5-oxopentanoate = 5-aminolevulinate. The protein operates within porphyrin-containing compound metabolism; protoporphyrin-IX biosynthesis; 5-aminolevulinate from L-glutamyl-tRNA(Glu): step 2/2. This chain is Glutamate-1-semialdehyde 2,1-aminomutase, found in Rhodopirellula baltica (strain DSM 10527 / NCIMB 13988 / SH1).